The following is a 385-amino-acid chain: Outer membrane protein assembly factor BamB (385 aa).

An N-terminal signal peptide occupies residues 1 to 20 (MRKVLKKAALCTFGFSMLFG). Residue Cys21 is the site of N-palmitoyl cysteine attachment. The S-diacylglycerol cysteine moiety is linked to residue Cys21.

The protein belongs to the BamB family. In terms of assembly, part of the Bam complex.

It is found in the cell outer membrane. In terms of biological role, part of the outer membrane protein assembly complex, which is involved in assembly and insertion of beta-barrel proteins into the outer membrane. In Aliivibrio fischeri (strain ATCC 700601 / ES114) (Vibrio fischeri), this protein is Outer membrane protein assembly factor BamB.